The following is a 411-amino-acid chain: Peptidase T (411 aa).

H78 serves as a coordination point for Zn(2+). Residue D80 is part of the active site. Residue D140 participates in Zn(2+) binding. E173 functions as the Proton acceptor in the catalytic mechanism. Residues E174, D196, and H379 each contribute to the Zn(2+) site.

Belongs to the peptidase M20B family. It depends on Zn(2+) as a cofactor.

The protein resides in the cytoplasm. The catalysed reaction is Release of the N-terminal residue from a tripeptide.. Its function is as follows. Cleaves the N-terminal amino acid of tripeptides. The chain is Peptidase T from Yersinia pseudotuberculosis serotype O:1b (strain IP 31758).